The chain runs to 425 residues: Serine--tRNA ligase (425 aa).

231 to 233 (TAE) contributes to the L-serine binding site. Residue 262–264 (RSE) participates in ATP binding. Glu-285 contacts L-serine. 349–352 (EISS) serves as a coordination point for ATP. Ser-385 contacts L-serine.

It belongs to the class-II aminoacyl-tRNA synthetase family. Type-1 seryl-tRNA synthetase subfamily. Homodimer. The tRNA molecule binds across the dimer.

The protein resides in the cytoplasm. It catalyses the reaction tRNA(Ser) + L-serine + ATP = L-seryl-tRNA(Ser) + AMP + diphosphate + H(+). The catalysed reaction is tRNA(Sec) + L-serine + ATP = L-seryl-tRNA(Sec) + AMP + diphosphate + H(+). Its pathway is aminoacyl-tRNA biosynthesis; selenocysteinyl-tRNA(Sec) biosynthesis; L-seryl-tRNA(Sec) from L-serine and tRNA(Sec): step 1/1. Its function is as follows. Catalyzes the attachment of serine to tRNA(Ser). Is also able to aminoacylate tRNA(Sec) with serine, to form the misacylated tRNA L-seryl-tRNA(Sec), which will be further converted into selenocysteinyl-tRNA(Sec). This Bartonella bacilliformis (strain ATCC 35685 / KC583 / Herrer 020/F12,63) protein is Serine--tRNA ligase.